A 385-amino-acid chain; its full sequence is Centrosomal protein of 44 kDa (385 aa).

Positions 11–191 (RKLEQRLRTL…TKCYKSALLE (181 aa)) are binds with microtubules and centrioles. The segment covering 194 to 204 (EEEEPTSDCEE) has biased composition (acidic residues). The segment at 194-224 (EEEEPTSDCEEDSHLQREMGSPFETAEETPN) is disordered. Coiled coils occupy residues 224 to 263 (NSEQ…KGKI) and 353 to 379 (TEES…ELLK).

Binds to centriolar microtubules.

It is found in the cytoplasm. It localises to the cytoskeleton. Its subcellular location is the microtubule organizing center. The protein resides in the centrosome. The protein localises to the centriole. It is found in the spindle pole. It localises to the midbody. Centriole-enriched microtubule-binding protein involved in centriole biogenesis. In collaboration with CEP295 and POC1B, is required for the centriole-to-centrosome conversion by ensuring the formation of bona fide centriole wall. Functions as a linker component that maintains centrosome cohesion. Associates with CROCC and regulates its stability and localization to the centrosome. The polypeptide is Centrosomal protein of 44 kDa (cep44) (Xenopus tropicalis (Western clawed frog)).